A 296-amino-acid chain; its full sequence is 2-haloacid dehalogenase, configuration-inverting (296 aa).

Belongs to the HAD-like hydrolase superfamily. S-2-haloalkanoic acid dehalogenase family.

The catalysed reaction is an (S)-2-haloacid + H2O = a (2R)-2-hydroxycarboxylate + a halide anion + H(+). It catalyses the reaction an (R)-2-haloacid + H2O = a (2S)-2-hydroxycarboxylate + a halide anion + H(+). Its function is as follows. Dehalogenates both (S)- and (R)-2-haloalkanoic acids to the corresponding (R)- and (S)-hydroxyalkanoic acids, respectively, with inversion of configuration at C-2. Acts on 2-haloalkanoic acids whose carbon chain lengths are five or less. This Alcaligenes xylosoxydans xylosoxydans (Achromobacter xylosoxidans) protein is 2-haloacid dehalogenase, configuration-inverting (dhlC).